Here is a 252-residue protein sequence, read N- to C-terminus: Triosephosphate isomerase (252 aa).

Residue 9–11 (NWK) coordinates substrate. The Electrophile role is filled by His95. Residue Glu167 is the Proton acceptor of the active site. Residues Gly173, Ser213, and 234-235 (GG) contribute to the substrate site.

It belongs to the triosephosphate isomerase family. As to quaternary structure, homodimer.

It localises to the cytoplasm. It catalyses the reaction D-glyceraldehyde 3-phosphate = dihydroxyacetone phosphate. It participates in carbohydrate biosynthesis; gluconeogenesis. The protein operates within carbohydrate degradation; glycolysis; D-glyceraldehyde 3-phosphate from glycerone phosphate: step 1/1. Involved in the gluconeogenesis. Catalyzes stereospecifically the conversion of dihydroxyacetone phosphate (DHAP) to D-glyceraldehyde-3-phosphate (G3P). This chain is Triosephosphate isomerase, found in Syntrophotalea carbinolica (strain DSM 2380 / NBRC 103641 / GraBd1) (Pelobacter carbinolicus).